The primary structure comprises 264 residues: Thymidylate synthase (264 aa).

R21 serves as a coordination point for dUMP. (6R)-5,10-methylene-5,6,7,8-tetrahydrofolate is bound at residue H51. A dUMP-binding site is contributed by 126-127; sequence RR. Catalysis depends on C146, which acts as the Nucleophile. Residues 166–169, N177, and 207–209 contribute to the dUMP site; these read RSAD and HIY. D169 lines the (6R)-5,10-methylene-5,6,7,8-tetrahydrofolate pocket. A263 is a binding site for (6R)-5,10-methylene-5,6,7,8-tetrahydrofolate.

This sequence belongs to the thymidylate synthase family. Bacterial-type ThyA subfamily. Homodimer.

The protein localises to the cytoplasm. It carries out the reaction dUMP + (6R)-5,10-methylene-5,6,7,8-tetrahydrofolate = 7,8-dihydrofolate + dTMP. The protein operates within pyrimidine metabolism; dTTP biosynthesis. Catalyzes the reductive methylation of 2'-deoxyuridine-5'-monophosphate (dUMP) to 2'-deoxythymidine-5'-monophosphate (dTMP) while utilizing 5,10-methylenetetrahydrofolate (mTHF) as the methyl donor and reductant in the reaction, yielding dihydrofolate (DHF) as a by-product. This enzymatic reaction provides an intracellular de novo source of dTMP, an essential precursor for DNA biosynthesis. This chain is Thymidylate synthase, found in Cupriavidus metallidurans (strain ATCC 43123 / DSM 2839 / NBRC 102507 / CH34) (Ralstonia metallidurans).